Reading from the N-terminus, the 186-residue chain is Peptide deformylase (186 aa).

The Fe cation site is built by cysteine 94 and histidine 136. The active site involves glutamate 137. Histidine 140 provides a ligand contact to Fe cation.

Belongs to the polypeptide deformylase family. The cofactor is Fe(2+).

It catalyses the reaction N-terminal N-formyl-L-methionyl-[peptide] + H2O = N-terminal L-methionyl-[peptide] + formate. Removes the formyl group from the N-terminal Met of newly synthesized proteins. Requires at least a dipeptide for an efficient rate of reaction. N-terminal L-methionine is a prerequisite for activity but the enzyme has broad specificity at other positions. This chain is Peptide deformylase, found in Prosthecochloris aestuarii (strain DSM 271 / SK 413).